We begin with the raw amino-acid sequence, 156 residues long: ATP synthase subunit b (156 aa).

Residues 5–25 (LTLIGQAIAFAVFVWFCMKFV) traverse the membrane as a helical segment.

Belongs to the ATPase B chain family. As to quaternary structure, F-type ATPases have 2 components, F(1) - the catalytic core - and F(0) - the membrane proton channel. F(1) has five subunits: alpha(3), beta(3), gamma(1), delta(1), epsilon(1). F(0) has three main subunits: a(1), b(2) and c(10-14). The alpha and beta chains form an alternating ring which encloses part of the gamma chain. F(1) is attached to F(0) by a central stalk formed by the gamma and epsilon chains, while a peripheral stalk is formed by the delta and b chains.

Its subcellular location is the cell inner membrane. F(1)F(0) ATP synthase produces ATP from ADP in the presence of a proton or sodium gradient. F-type ATPases consist of two structural domains, F(1) containing the extramembraneous catalytic core and F(0) containing the membrane proton channel, linked together by a central stalk and a peripheral stalk. During catalysis, ATP synthesis in the catalytic domain of F(1) is coupled via a rotary mechanism of the central stalk subunits to proton translocation. In terms of biological role, component of the F(0) channel, it forms part of the peripheral stalk, linking F(1) to F(0). The chain is ATP synthase subunit b from Chromohalobacter salexigens (strain ATCC BAA-138 / DSM 3043 / CIP 106854 / NCIMB 13768 / 1H11).